A 103-amino-acid polypeptide reads, in one-letter code: Large ribosomal subunit protein bL21 (103 aa).

It belongs to the bacterial ribosomal protein bL21 family. Part of the 50S ribosomal subunit. Contacts protein L20.

Functionally, this protein binds to 23S rRNA in the presence of protein L20. This is Large ribosomal subunit protein bL21 from Alteromonas mediterranea (strain DSM 17117 / CIP 110805 / LMG 28347 / Deep ecotype).